The chain runs to 88 residues: Small ribosomal subunit protein bS20 (88 aa).

The span at 1-23 (MPNTKSAEKALRVADANRQENRR) shows a compositional bias: basic and acidic residues. A disordered region spans residues 1–29 (MPNTKSAEKALRVADANRQENRRAKSQVK).

It belongs to the bacterial ribosomal protein bS20 family.

Functionally, binds directly to 16S ribosomal RNA. This is Small ribosomal subunit protein bS20 from Dehalococcoides mccartyi (strain ATCC BAA-2100 / JCM 16839 / KCTC 5957 / BAV1).